The sequence spans 299 residues: MIRKEKFGDEILKAHILVEALPYIKKFSGKTVVIKYGGSAMLDCNLKKMVMQDVVLMKFVGLNPVIVHGGGPEISSFLKKLGIESKFVNGLRVTDEKTAEIVEMVLVGKINKEIVSMINELGGMAVGISGKDGKLLKAEKDLSNGDLGYVGKIVEVNIEVIEMLIDRGYIPVIAPVSFGDDGKTYNVNADTAAGKIAEALKAEKLILLTDVEGVLENVEDKTSLISRMDLEHAKKLMDSGRINGGMIPKLKCCIKAVENGVKRAHIIDGRLTHSLLLEIFTDEGIGTMIGKECFDDDNL.

Substrate contacts are provided by residues 70-71 (GG), R92, and N186.

It belongs to the acetylglutamate kinase family. ArgB subfamily.

The protein localises to the cytoplasm. The catalysed reaction is N-acetyl-L-glutamate + ATP = N-acetyl-L-glutamyl 5-phosphate + ADP. It participates in amino-acid biosynthesis; L-arginine biosynthesis; N(2)-acetyl-L-ornithine from L-glutamate: step 2/4. In terms of biological role, catalyzes the ATP-dependent phosphorylation of N-acetyl-L-glutamate. This is Acetylglutamate kinase from Caldanaerobacter subterraneus subsp. tengcongensis (strain DSM 15242 / JCM 11007 / NBRC 100824 / MB4) (Thermoanaerobacter tengcongensis).